The sequence spans 349 residues: Cobalt-precorrin-5B C(1)-methyltransferase (349 aa).

Belongs to the CbiD family.

The enzyme catalyses Co-precorrin-5B + S-adenosyl-L-methionine = Co-precorrin-6A + S-adenosyl-L-homocysteine. Its pathway is cofactor biosynthesis; adenosylcobalamin biosynthesis; cob(II)yrinate a,c-diamide from sirohydrochlorin (anaerobic route): step 6/10. Its function is as follows. Catalyzes the methylation of C-1 in cobalt-precorrin-5B to form cobalt-precorrin-6A. This Saccharolobus islandicus (strain M.16.27) (Sulfolobus islandicus) protein is Cobalt-precorrin-5B C(1)-methyltransferase.